The primary structure comprises 131 residues: Fluoride-specific ion channel FluC 1 (131 aa).

4 consecutive transmembrane segments (helical) span residues 4–24 (ILLI…LSGW), 32–52 (FPLG…LVMY), 66–86 (ILLT…SYES), and 95–115 (LMQL…AVYL). Na(+) is bound by residues Gly-74 and Thr-77.

It belongs to the fluoride channel Fluc/FEX (TC 1.A.43) family.

It localises to the cell membrane. The catalysed reaction is fluoride(in) = fluoride(out). With respect to regulation, na(+) is not transported, but it plays an essential structural role and its presence is essential for fluoride channel function. Its function is as follows. Fluoride-specific ion channel. Important for reducing fluoride concentration in the cell, thus reducing its toxicity. The chain is Fluoride-specific ion channel FluC 1 from Methanosarcina acetivorans (strain ATCC 35395 / DSM 2834 / JCM 12185 / C2A).